Reading from the N-terminus, the 76-residue chain is Omega/Kappa-hexatoxin-Hv1h (76 aa).

An N-terminal signal peptide occupies residues 1 to 22 (MNTATGFIVLLVLATILGGIEA). Residues 23 to 35 (GESHMRKDAMGRV) constitute a propeptide that is removed on maturation. 3 disulfides stabilise this stretch: Cys-40/Cys-55, Cys-47/Cys-60, and Cys-54/Cys-74.

Belongs to the neurotoxin 08 (Shiva) family. 02 (omega/kappa toxin) subfamily. Expressed by the venom gland.

It is found in the secreted. In terms of biological role, toxin that may inhibit ion channels. This Hadronyche versuta (Blue mountains funnel-web spider) protein is Omega/Kappa-hexatoxin-Hv1h.